Here is a 181-residue protein sequence, read N- to C-terminus: Large ribosomal subunit protein bL17 (181 aa).

Residues Lys-141–Ala-159 are compositionally biased toward low complexity. The disordered stretch occupies residues Lys-141–Asp-181. Residues Asp-171–Asp-181 are compositionally biased toward basic and acidic residues.

This sequence belongs to the bacterial ribosomal protein bL17 family. As to quaternary structure, part of the 50S ribosomal subunit. Contacts protein L32.

The polypeptide is Large ribosomal subunit protein bL17 (Geotalea daltonii (strain DSM 22248 / JCM 15807 / FRC-32) (Geobacter daltonii)).